The following is a 509-amino-acid chain: H/ACA ribonucleoprotein complex subunit DKC1 (509 aa).

The interval 1 to 25 (MADAEAAMTFPKKHKKKKERKPLPE) is disordered. At A2 the chain carries N-acetylalanine. Residues 2–22 (ADAEAAMTFPKKHKKKKERKP) form a nucleolar localization region. Residues 11–20 (PKKHKKKKER) show a composition bias toward basic residues. Residues K21, K40, and K44 each participate in a glycyl lysine isopeptide (Lys-Gly) (interchain with G-Cter in SUMO2) cross-link. Residue D126 is the Nucleophile of the active site. K192 participates in a covalent cross-link: Glycyl lysine isopeptide (Lys-Gly) (interchain with G-Cter in SUMO2). Residues 297 to 372 (HKRLVMKDSA…VVAKIKRVIM (76 aa)) enclose the PUA domain. Positions 381 to 509 (WGLGPKASQK…KARAAEELSG (129 aa)) are disordered. Phosphoserine is present on S388. Residues K395 and K425 each participate in a glycyl lysine isopeptide (Lys-Gly) (interchain with G-Cter in SUMO2) cross-link. Over residues 416–425 (DYVDYSDSSK) the composition is skewed to basic and acidic residues. Residues 447-509 (KRKRDSDSDA…KARAAEELSG (63 aa)) form a nuclear and nucleolar localization region. 2 positions are modified to phosphoserine: S452 and S454. The residue at position 460 (T460) is a Phosphothreonine. The segment covering 466–475 (RVKKEKKKKK) has biased composition (basic residues). Residues 481–490 (GEEAAEDGDG) are compositionally biased toward acidic residues. S508 is subject to Phosphoserine.

The protein belongs to the pseudouridine synthase TruB family. As to quaternary structure, part of the H/ACA small nucleolar ribonucleoprotein (H/ACA snoRNP) complex, which contains NHP2/NOLA2, GAR1/NOLA1, NOP10/NOLA3, and DKC1/NOLA4, which is presumed to be the catalytic subunit. The complex contains a stable core formed by binding of one or two NOP10-DKC1 heterodimers to NHP2; GAR1 subsequently binds to this core via DKC1. The complex binds a box H/ACA small nucleolar RNA (snoRNA), which may target the specific site of modification within the RNA substrate. During assembly, the complex contains NAF1 instead of GAR1/NOLA1. The complex also interacts with TERC, which contains a 3'-terminal domain related to the box H/ACA snoRNAs. Specific interactions with snoRNAs or TERC are mediated by GAR1 and NHP2. Associates with NOLC1/NOPP140. H/ACA snoRNPs interact with the SMN complex, consisting of SMN1 or SMN2, GEMIN2/SIP1, DDX20/GEMIN3, and GEMIN4. This is mediated by interaction between GAR1 and SMN1 or SMN2. The SMN complex may be required for correct assembly of the H/ACA snoRNP complex. Component of the telomerase holoenzyme complex composed of one molecule of TERT, one molecule of WRAP53/TCAB1, two molecules of H/ACA ribonucleoprotein complex subunits DKC1, NOP10, NHP2 and GAR1, and a telomerase RNA template component (TERC). The telomerase holoenzyme complex is associated with TEP1, SMG6/EST1A and POT1. Interacts with SHQ1; this interaction may lead to the stabilization of DKC1, from the time of its synthesis until its association with NOP10, NHP2, and NAF1 at the nascent H/ACA RNA. Interacts with HMBOX1. Interacts with DHX36.

It is found in the nucleus. Its subcellular location is the nucleolus. It localises to the cajal body. The enzyme catalyses uridine in 5S rRNA = pseudouridine in 5S rRNA. Functionally, catalytic subunit of H/ACA small nucleolar ribonucleoprotein (H/ACA snoRNP) complex, which catalyzes pseudouridylation of rRNA. This involves the isomerization of uridine such that the ribose is subsequently attached to C5, instead of the normal N1. Each rRNA can contain up to 100 pseudouridine ('psi') residues, which may serve to stabilize the conformation of rRNAs. Required for ribosome biogenesis and telomere maintenance. Also required for correct processing or intranuclear trafficking of TERC, the RNA component of the telomerase reverse transcriptase (TERT) holoenzyme. In Rattus norvegicus (Rat), this protein is H/ACA ribonucleoprotein complex subunit DKC1 (Dkc1).